The primary structure comprises 305 residues: MASRQPEVPALEASGPLGKMSLPIGIYRRALSYDDTLEDPAPMTPPPSDMGSVPWKPVIPERKYQHLAKVEEGEASLPSPAMTLSSAIDSVDKVPVVKAKATHVIMNSLITKQTQESIQHFERQAGLRDAGYTPHKGLTTEETKYLRVAEALHKLKLQSGEITKEERQPASAQSTPSTTPHSSPKQRSRGWFTSGSSTALPGPNPSTMDSGSGDKDRNLSDKWSLFGPRSLQKYDSGSSTTQAYRGVQKPSPLELIRAQANRMAEDPAALKPPKMDIPVMEGKKQPPRAHNLKPRDLNVLTPTGF.

Disordered regions lie at residues Met-1–Met-20 and Leu-37–Lys-56. Thr-44 is modified (phosphothreonine). A Flavin-containing monooxygenase motif motif is present at residues Leu-67–Leu-77. Residues Ser-159–Phe-305 are disordered. Positions Pro-169–Ser-183 are enriched in low complexity. Residue Thr-175 is modified to Phosphothreonine. 2 positions are modified to phosphoserine: Ser-182 and Ser-183. 2 stretches are compositionally biased toward polar residues: residues Trp-191–Ser-210 and Lys-233–Ala-243.

This sequence belongs to the P33MONOX family. In terms of assembly, interacts with NELFB, NOL12 and PRNP.

It is found in the cytoplasm. Functionally, potential NADPH-dependent oxidoreductase. May be involved in the regulation of neuronal survival, differentiation and axonal outgrowth. The chain is Putative monooxygenase p33MONOX (P33MONOX) from Pongo abelii (Sumatran orangutan).